Here is a 672-residue protein sequence, read N- to C-terminus: Cytadherence high molecular weight protein 3 (672 aa).

Repeat copies occupy residues 98-100 (YDQ), 106-108 (YDQ), 160-162 (PVV), 197-199 (YDQ), 206-208 (YDQ), 211-213 (YDQ), 221-223 (YDQ), 226-228 (YDQ), 235-237 (YDQ), 249-251 (YDQ), 288-290 (PVV), 310-319 (VEPTPTPVVE), 312-315 (PTPT), 316-318 (PVV), 322-324 (PVV), 330-339 (VEPTPTPVVE), 332-335 (PTPT), 336-338 (PVV), 354-358 (PQPTP), 385-389 (PTPVP), 396-400 (PQPTP), 402-404 (PVV), 413-415 (PVV), 424-428 (PTPAP), and 454-456 (PVV). The interval 98–251 (YDQVNNTFYD…NAYNTQNYDQ (154 aa)) is 9 X 3 AA repeats OF Y-D-Q. The segment at 160–456 (PVVDPDATPE…QTTPAVPPVV (297 aa)) is 8 X 3 AA repeats of P-V-V. The tract at residues 177–197 (GLDPLPQAPDEYQDTTAPPAY) is disordered. The interval 310-339 (VEPTPTPVVETAPVVEAPKVVEPTPTPVVE) is 2 X 10 AA repeats of V-E-P-T-P-T-P-V-V-E. Residues 312 to 428 (PTPTPVVETA…PKVVTPTPAP (117 aa)) are 6 X 5 AA repeats of P-X-P-X-P.

It localises to the cell projection. The protein resides in the attachment organelle membrane. In terms of biological role, component of the cytoskeleton-like structure which stabilizes the shape of the wall-less mycoplasma. This cytoskeleton-like network of accessory proteins containing HMW proteins 1 to 5 allows the proper anchoring of cytadhesin proteins in the mycoplasmal membrane at the attachment organelle. Essential for successful surface parasitism. The sequence is that of Cytadherence high molecular weight protein 3 (hmw3) from Mycoplasma pneumoniae (strain ATCC 29342 / M129 / Subtype 1) (Mycoplasmoides pneumoniae).